The primary structure comprises 120 residues: Flagellar protein FliT (120 aa).

A required for homodimerization region spans residues 1–50 (MNDFISSLNNWQALYALSNTMLSLANSGQWDELIEQEVKYVTLVEAIARN). A fliD binding region spans residues 59–97 (FQEKARELLTKVLANEAALKIKLQARMEELRVLIEQNGN).

It belongs to the FliT family. In terms of assembly, homodimer. Interacts with FliD and FlhC.

The protein localises to the cytoplasm. Its subcellular location is the cytosol. Its function is as follows. Dual-function protein that regulates the transcription of class 2 flagellar operons and that also acts as an export chaperone for the filament-capping protein FliD. As a transcriptional regulator, acts as an anti-FlhDC factor; it directly binds FlhC, thus inhibiting the binding of the FlhC/FlhD complex to class 2 promoters, resulting in decreased expression of class 2 flagellar operons. As a chaperone, effects FliD transition to the membrane by preventing its premature polymerization, and by directing it to the export apparatus. This is Flagellar protein FliT from Cronobacter sakazakii (strain ATCC BAA-894) (Enterobacter sakazakii).